Here is a 66-residue protein sequence, read N- to C-terminus: U1-theraphotoxin-Cg1a 1 (66 aa).

The signal sequence occupies residues 1–21; that stretch reads MKTSALFVIFGLVLLFCNSFA. A propeptide spanning residues 22–29 is cleaved from the precursor; sequence AELKTTGR. 3 disulfides stabilise this stretch: cysteine 31-cysteine 46, cysteine 38-cysteine 51, and cysteine 45-cysteine 58. Position 63 is a proline amide (proline 63).

Belongs to the neurotoxin 10 (Hwtx-1) family. 46 (Jztx-7/10/12) subfamily. In terms of tissue distribution, expressed by the venom gland.

The protein localises to the secreted. Its function is as follows. Probable ion channel inhibitor. In Chilobrachys guangxiensis (Chinese earth tiger tarantula), this protein is U1-theraphotoxin-Cg1a 1.